We begin with the raw amino-acid sequence, 595 residues long: DNA primase (595 aa).

The segment at 38–62 adopts a CHC2-type zinc-finger fold; sequence CPFHQEKTPSFTVSDSKRFFYCFGC. Positions 250–332 constitute a Toprim domain; the sequence is NHSILVEGYF…EKKISFIRLP (83 aa). Mg(2+)-binding residues include Glu256, Asp300, and Asp302.

The protein belongs to the DnaG primase family. Monomer. Interacts with DnaB. Zn(2+) is required as a cofactor. The cofactor is Mg(2+).

The catalysed reaction is ssDNA + n NTP = ssDNA/pppN(pN)n-1 hybrid + (n-1) diphosphate.. Its function is as follows. RNA polymerase that catalyzes the synthesis of short RNA molecules used as primers for DNA polymerase during DNA replication. The protein is DNA primase of Rickettsia felis (strain ATCC VR-1525 / URRWXCal2) (Rickettsia azadi).